A 171-amino-acid chain; its full sequence is AP-3 complex subunit sigma (171 aa).

The protein belongs to the adaptor complexes small subunit family. As to quaternary structure, adaptor protein complex 3 (AP-3) is a heterotetramer composed of two large adaptins (delta-type subunit and beta-type subunit), a medium adaptin (mu-type subunit) and a small adaptin (sigma-type subunit).

The protein localises to the endosome membrane. Functionally, part of the AP-3 complex, an adaptor-related complex which is essential for the compartmentalization of the endocytic pathway. This Dictyostelium discoideum (Social amoeba) protein is AP-3 complex subunit sigma (ap3s1).